A 558-amino-acid chain; its full sequence is Xylulose kinase 2 (558 aa).

Substrate is bound by residues aspartate 16, glutamine 20–lysine 23, serine 111, and aspartate 283. ATP is bound by residues threonine 305 and glycine 456–asparagine 460.

Belongs to the FGGY kinase family. It depends on a divalent metal cation as a cofactor.

Its subcellular location is the cytoplasm. It carries out the reaction D-xylulose + ATP = D-xylulose 5-phosphate + ADP + H(+). It functions in the pathway isoprenoid biosynthesis; carotenoid biosynthesis. With respect to regulation, repressed by oxo-clomazone (keto-clomazone), a bleaching herbicide. Mediates 1-deoxy-D-xylulose (DX) phosphorylation in the cytoplasm prior to the translocation of 1-deoxy-D-xylulose 5-phosphate into plastids. Can also phosphorylate D-xylulose (Xyl). Uses preferentially ATP as cosubstrate. The chain is Xylulose kinase 2 from Arabidopsis thaliana (Mouse-ear cress).